The following is a 95-amino-acid chain: Co-chaperonin GroES (95 aa).

The protein belongs to the GroES chaperonin family. As to quaternary structure, heptamer of 7 subunits arranged in a ring. Interacts with the chaperonin GroEL.

It is found in the cytoplasm. Its function is as follows. Together with the chaperonin GroEL, plays an essential role in assisting protein folding. The GroEL-GroES system forms a nano-cage that allows encapsulation of the non-native substrate proteins and provides a physical environment optimized to promote and accelerate protein folding. GroES binds to the apical surface of the GroEL ring, thereby capping the opening of the GroEL channel. The polypeptide is Co-chaperonin GroES (Streptococcus equi subsp. equi (strain 4047)).